A 292-amino-acid polypeptide reads, in one-letter code: Lipoyl synthase (292 aa).

The [4Fe-4S] cluster site is built by Cys38, Cys43, Cys49, Cys64, Cys68, Cys71, and Ser277. One can recognise a Radical SAM core domain in the interval Trp50–Arg266.

It belongs to the radical SAM superfamily. Lipoyl synthase family. [4Fe-4S] cluster serves as cofactor.

The protein resides in the cytoplasm. It carries out the reaction [[Fe-S] cluster scaffold protein carrying a second [4Fe-4S](2+) cluster] + N(6)-octanoyl-L-lysyl-[protein] + 2 oxidized [2Fe-2S]-[ferredoxin] + 2 S-adenosyl-L-methionine + 4 H(+) = [[Fe-S] cluster scaffold protein] + N(6)-[(R)-dihydrolipoyl]-L-lysyl-[protein] + 4 Fe(3+) + 2 hydrogen sulfide + 2 5'-deoxyadenosine + 2 L-methionine + 2 reduced [2Fe-2S]-[ferredoxin]. It functions in the pathway protein modification; protein lipoylation via endogenous pathway; protein N(6)-(lipoyl)lysine from octanoyl-[acyl-carrier-protein]: step 2/2. Its function is as follows. Catalyzes the radical-mediated insertion of two sulfur atoms into the C-6 and C-8 positions of the octanoyl moiety bound to the lipoyl domains of lipoate-dependent enzymes, thereby converting the octanoylated domains into lipoylated derivatives. This Chlorobium limicola (strain DSM 245 / NBRC 103803 / 6330) protein is Lipoyl synthase.